A 264-amino-acid polypeptide reads, in one-letter code: Phosphatidylglycerol--prolipoprotein diacylglyceryl transferase (264 aa).

The next 7 membrane-spanning stretches (helical) occupy residues 14 to 34 (VGPLSVRWYGLMYLIAFLLFM), 57 to 77 (LLLYGMLGVVLGGRLGEVLFF), 89 to 109 (ILAIWKGGMSFHGGFLGVLVA), 127 to 147 (FIAPLVPTGLAAGRLGNFING), 176 to 196 (QLYQVAGEGLLLFAILWVYSA), 202 to 222 (KAVSAMFLIGYGVLRFAAEFF), and 235 to 255 (LGLSTAQWLCVPMIAVGVGLL). A 1,2-diacyl-sn-glycero-3-phospho-(1'-sn-glycerol) is bound at residue Arg140.

This sequence belongs to the Lgt family.

The protein resides in the cell inner membrane. The catalysed reaction is L-cysteinyl-[prolipoprotein] + a 1,2-diacyl-sn-glycero-3-phospho-(1'-sn-glycerol) = an S-1,2-diacyl-sn-glyceryl-L-cysteinyl-[prolipoprotein] + sn-glycerol 1-phosphate + H(+). Its pathway is protein modification; lipoprotein biosynthesis (diacylglyceryl transfer). Its function is as follows. Catalyzes the transfer of the diacylglyceryl group from phosphatidylglycerol to the sulfhydryl group of the N-terminal cysteine of a prolipoprotein, the first step in the formation of mature lipoproteins. The polypeptide is Phosphatidylglycerol--prolipoprotein diacylglyceryl transferase (Aromatoleum aromaticum (strain DSM 19018 / LMG 30748 / EbN1) (Azoarcus sp. (strain EbN1))).